We begin with the raw amino-acid sequence, 992 residues long: Disks large-associated protein 4 (992 aa).

Over residues 1-20 the composition is skewed to basic and acidic residues; sequence MKGLGDSRPRHLSDSLDPPH. 2 disordered regions span residues 1 to 31 and 157 to 225; these read MKGL…DRNP and MEGT…PASG. The segment covering 162-171 has biased composition (gly residues); that stretch reads GKVGGNGSKK. The span at 172-194 shows a compositional bias: basic and acidic residues; the sequence is GGLEDGKGRRAKSKERAKAGEPK. Residues 199 to 208 are compositionally biased toward polar residues; sequence SNISGWWSSD. Phosphoserine is present on residues S206 and S207. The residue at position 290 (R290) is an Omega-N-methylarginine. The segment at 342–396 is disordered; that stretch reads TTLLSPRDMDSTAEGPIPCRRMRSGSYIKAMGDEDSDESGGGSPKPSPKTAARRQ. A phosphoserine mark is found at S377, S380, S384, S388, S405, S415, and S421. Disordered stretches follow at residues 527–751, 763–798, and 915–992; these read SVSL…GPRQ, SYGD…AQPG, and TPEK…QTRL. Residues 528-554 show a composition bias toward low complexity; that stretch reads VSLQSLSPPPSTGSLSNSRTLPSSSCL. Positions 576 to 591 are enriched in polar residues; that stretch reads VTVQSSTESAQDTYLD. Phosphoserine is present on residues S580, S581, S609, S611, S665, and S744. Positions 600-620 are enriched in low complexity; sequence TSQSGLSNSSDSLDSSTRPPS. Position 915 is a phosphothreonine (T915). Basic and acidic residues-rich tracts occupy residues 915–925 and 940–958; these read TPEKRKEEKKP and VSRD…EARK. Polar residues predominate over residues 969-978; it reads VRQNSATESA. The residue at position 973 (S973) is a Phosphoserine.

Belongs to the SAPAP family. Interacts with DLG1 and DLG4/PSD-95.

It is found in the membrane. May play a role in the molecular organization of synapses and neuronal cell signaling. Could be an adapter protein linking ion channel to the subsynaptic cytoskeleton. May induce enrichment of PSD-95/SAP90 at the plasma membrane. The sequence is that of Disks large-associated protein 4 (Dlgap4) from Mus musculus (Mouse).